The following is a 174-amino-acid chain: Co-chaperone protein HscB homolog (174 aa).

In terms of domain architecture, J spans 2–74 (NYFELFSFTP…ILRAEHMLSL (73 aa)).

Belongs to the HscB family. Interacts with HscA and stimulates its ATPase activity.

Functionally, co-chaperone involved in the maturation of iron-sulfur cluster-containing proteins. Seems to help targeting proteins to be folded toward HscA. This chain is Co-chaperone protein HscB homolog, found in Shewanella woodyi (strain ATCC 51908 / MS32).